A 70-amino-acid chain; its full sequence is Cold shock-like protein CspA (70 aa).

Residues 7–67 (GSVKWFNETK…GKKGPQAAQV (61 aa)) form the CSD domain.

It localises to the cytoplasm. The sequence is that of Cold shock-like protein CspA (cspA) from Vibrio cholerae serotype O1 (strain ATCC 39315 / El Tor Inaba N16961).